The following is a 458-amino-acid chain: Lysine-rich nucleolar protein 1 (458 aa).

A compositionally biased stretch (basic and acidic residues) spans Met-1–Glu-14. The tract at residues Met-1–Val-21 is disordered. Lys-7 is covalently cross-linked (Glycyl lysine isopeptide (Lys-Gly) (interchain with G-Cter in SUMO2)). Ser-42 and Ser-50 each carry phosphoserine. The tract at residues Ala-46 to Lys-305 is disordered. Basic residues predominate over residues Val-64–Gly-73. A Glycyl lysine isopeptide (Lys-Gly) (interchain with G-Cter in SUMO2) cross-link involves residue Lys-101. Ser-111 carries the post-translational modification Phosphoserine. A Glycyl lysine isopeptide (Lys-Gly) (interchain with G-Cter in SUMO2) cross-link involves residue Lys-130. Phosphoserine is present on Ser-132. The span at Gly-145–Lys-155 shows a compositional bias: basic residues. The segment covering Glu-173 to Glu-192 has biased composition (basic and acidic residues). Basic residues predominate over residues Gln-198–Ile-218. Residue Lys-249 forms a Glycyl lysine isopeptide (Lys-Gly) (interchain with G-Cter in SUMO1); alternate linkage. Residue Lys-249 forms a Glycyl lysine isopeptide (Lys-Gly) (interchain with G-Cter in SUMO2); alternate linkage. Ser-265 is subject to Phosphoserine. The span at Ser-265–Lys-274 shows a compositional bias: basic residues. Glycyl lysine isopeptide (Lys-Gly) (interchain with G-Cter in SUMO2) cross-links involve residues Lys-275, Lys-287, and Lys-305. An interaction with ZNF106 region spans residues Glu-306–Asp-458. Phosphothreonine is present on residues Thr-308 and Thr-310. Residues Lys-319, Lys-353, Lys-373, Lys-375, and Lys-407 each participate in a glycyl lysine isopeptide (Lys-Gly) (interchain with G-Cter in SUMO2) cross-link. Over residues Gln-336–Lys-353 the composition is skewed to basic and acidic residues. Residues Gln-336 to Thr-355 are disordered. Residue Arg-430 is modified to Omega-N-methylarginine. Lys-442 participates in a covalent cross-link: Glycyl lysine isopeptide (Lys-Gly) (interchain with G-Cter in SUMO2).

As to quaternary structure, interacts with ZNF106.

It is found in the nucleus. The protein localises to the nucleolus. This chain is Lysine-rich nucleolar protein 1 (KNOP1), found in Homo sapiens (Human).